The primary structure comprises 316 residues: Ribosomal RNA small subunit methyltransferase H (316 aa).

Residues Ala-35–His-37, Asp-55, Phe-84, Asp-105, and Gln-112 contribute to the S-adenosyl-L-methionine site.

This sequence belongs to the methyltransferase superfamily. RsmH family.

It is found in the cytoplasm. The catalysed reaction is cytidine(1402) in 16S rRNA + S-adenosyl-L-methionine = N(4)-methylcytidine(1402) in 16S rRNA + S-adenosyl-L-homocysteine + H(+). Its function is as follows. Specifically methylates the N4 position of cytidine in position 1402 (C1402) of 16S rRNA. The chain is Ribosomal RNA small subunit methyltransferase H from Streptococcus thermophilus (strain ATCC BAA-250 / LMG 18311).